Consider the following 117-residue polypeptide: Nascent polypeptide-associated complex protein (117 aa).

Positions 3-72 (PVNPRDLEKM…YTVEKPREET (70 aa)) constitute an NAC-A/B domain.

It belongs to the NAC-alpha family. In terms of assembly, homodimer. Interacts with the ribosome. Binds ribosomal RNA.

In terms of biological role, contacts the emerging nascent chain on the ribosome. This chain is Nascent polypeptide-associated complex protein, found in Aeropyrum pernix (strain ATCC 700893 / DSM 11879 / JCM 9820 / NBRC 100138 / K1).